A 1085-amino-acid chain; its full sequence is MSNPNQAAKTGQTNDAQNPASACPFKQPLIGIIPVRYAFDVYDDQGQALHPLPKADRQWKGQFSIKQRSYTLRQLRDGWLYVYDETAKTLHEYEVVGCKLTKIDWSDDEANKPTHERGSKGESKSCLLYPAQHTLSIGYAHQRWTWRVCEHMRSNTSSRHAVMRKVSLKQFESNGTHPHAHFAQYLEDYVADIGTPAEQDIFKDTCTPSLPVEKSEEAVKGTEFKFVADKAVVSSSDYLQDLPEQNCGLFVALNDPLADVSDLFVTFTTQVAKRTKAIGDETQQHKMQMAELTRTLGRIRLEEKEIPDFVKQDPIRILELERAITEYCATAKLAEIESHHLASEGHSPSGNYALMQQQAEQKLAELKTLYRFEPTSAQMRKWRKKDNSFIDEVRWADLDNFLVEHYTELKGLDEQIKQHYAQFMSAFNQLGLDPLLFGMDNQDEVQQAYLLALTSQFLVVVTQVNHDEKSLEILKKDLSFDSPKNLMALASTGFSLQANQAINNHIQGFSTAFLSTSNPSDMVAFATAIANWDTFTGDERIQEKAWFKRWIEPAQSSFGALQKAVANQAKESWQAVMELLFPYQNQPKGGTPSLLANLRLLLVESLVREEAVLQHNPKYAAELKQFETKLNAILQEMNDALELKPGNVSPKNHQIATAQSAQRKLGQLLSSELPMMLTLKNQAAMNTFQQSVNEKLSALSKNVKTSSASVSQKLGGLGGLLFALNLWNTMTVLENIRYKVAQYPSWNPFKNPALGEAIYATGNTIVVAGAISAGRAWVTIAEQGLLDRTLKNALNTTKVLGTKDALKTFAKSIALVATVGMIASALETWESWGKFNDSSKTDLERFGYLLKAGATGAQGIIFYIQFFTLLGSGIGGPSIAAISAGWMLAGFAVIGIVYLIGVILTNVFKRSELEIWLSKSTWGKESAHWPVGKELTELEHLLHRPSLRLSQVTQRKAAQWMDSGSLQWQLELTLPDYLKGQTIGLQITRLPAQPAYYQPQREAVTPILINEQQGKWSIEDNQPVYRITLGGSEKDTVGVCVALPLRWGKELSLKFYASGTRAGELDLQSAEANDIATRNLVVGKG.

The segment at 1 to 20 is disordered; that stretch reads MSNPNQAAKTGQTNDAQNPA. A run of 4 helical transmembrane segments spans residues 753-773, 813-833, 860-880, and 884-904; these read ALGE…AISA, IALV…ESWG, IIFY…PSIA, and AGWM…GVIL.

Its subcellular location is the secreted. It is found in the host membrane. Toxin secreted by the type VI (T6SS) secretion system that acts on prokaryotic target cells. Acts in conjunction with VasW, an accessory protein to VasX, to compromise the inner membrane of prokaryotic target cells. This chain is Toxin VasX, found in Vibrio cholerae serotype O1 (strain ATCC 39315 / El Tor Inaba N16961).